The chain runs to 570 residues: Biotin biosynthesis bifunctional protein BioHC (570 aa).

Residues 1–29 form a disordered region; that stretch reads MTEVNVRAAATPEEKPFLNRTRHEPANPQ. The interval 1-279 is carboxylesterase; that stretch reads MTEVNVRAAA…HISHPREVAT (279 aa). Residues 12–25 are compositionally biased toward basic and acidic residues; that stretch reads PEEKPFLNRTRHEP. Substrate-binding positions include tryptophan 41, 105-106, and 175-179; these read SL and FIALQ. Catalysis depends on serine 105, which acts as the Nucleophile. Active-site residues include aspartate 239 and histidine 267. Histidine 267 provides a ligand contact to substrate. The interval 280-570 is malonyl-ACP O-methyltransferase; sequence MINSFLRQQA…RKPLDESASA (291 aa).

This sequence in the N-terminal section; belongs to the AB hydrolase superfamily. Carboxylesterase BioH family. It in the C-terminal section; belongs to the methyltransferase superfamily.

It carries out the reaction a carboxylic ester + H2O = an alcohol + a carboxylate + H(+). The enzyme catalyses malonyl-[ACP] + S-adenosyl-L-methionine = malonyl-[ACP] methyl ester + S-adenosyl-L-homocysteine. It functions in the pathway cofactor biosynthesis; biotin biosynthesis. In terms of biological role, converts the free carboxyl group of a malonyl-thioester to its methyl ester by transfer of a methyl group from S-adenosyl-L-methionine (SAM). It allows to synthesize pimeloyl-ACP via the fatty acid synthetic pathway. Its function is as follows. The physiological role of BioH is to remove the methyl group introduced by BioC when the pimeloyl moiety is complete. It allows to synthesize pimeloyl-ACP via the fatty acid synthetic pathway through the hydrolysis of the ester bonds of pimeloyl-ACP esters. This Teredinibacter turnerae (strain ATCC 39867 / T7901) protein is Biotin biosynthesis bifunctional protein BioHC (bioC).